Here is a 299-residue protein sequence, read N- to C-terminus: Epimerase family protein SH2119 (299 aa).

The protein belongs to the NAD(P)-dependent epimerase/dehydratase family. SDR39U1 subfamily.

The polypeptide is Epimerase family protein SH2119 (Staphylococcus haemolyticus (strain JCSC1435)).